A 228-amino-acid polypeptide reads, in one-letter code: PKHD-type hydroxylase Rmet_0838 (228 aa).

One can recognise a Fe2OG dioxygenase domain in the interval 78–179 (RVLPPMFNRY…RWASFFWAQS (102 aa)). Fe cation is bound by residues histidine 96, aspartate 98, and histidine 160. Arginine 170 is a binding site for 2-oxoglutarate.

Fe(2+) serves as cofactor. Requires L-ascorbate as cofactor.

This Cupriavidus metallidurans (strain ATCC 43123 / DSM 2839 / NBRC 102507 / CH34) (Ralstonia metallidurans) protein is PKHD-type hydroxylase Rmet_0838.